Reading from the N-terminus, the 196-residue chain is Signal peptidase complex catalytic subunit SEC11 (196 aa).

At 1–14 the chain is on the cytoplasmic side; it reads MLSSLSPYMANPRQ. The chain crosses the membrane as a helical; Signal-anchor for type II membrane protein span at residues 15–33; it reads TFTQVLNFALVLSTAFMLW. The Lumenal segment spans residues 34–196; it reads KGLSVYTNSA…MGLMVILQRE (163 aa). Catalysis depends on charge relay system residues Ser53 and His92. Positions 101 to 133 are disordered; the sequence is VPGKDKTKKGGKQGVEASPSSLESQKLLTKGDN. Over residues 118–133 the composition is skewed to polar residues; it reads SPSSLESQKLLTKGDN. N-linked (GlcNAc...) asparagine glycosylation is present at Asn134. The active-site Charge relay system is Asp138. Residues 182-193 are C-terminal short (CTS) helix; sequence VLLGFMGLMVIL.

It belongs to the peptidase S26B family. As to quaternary structure, component of the signal peptidase complex (SPC) composed of a catalytic subunit SEC11 and three accessory subunits SPC1, SPC2 and SPC3. The complex induces a local thinning of the ER membrane which is used to measure the length of the signal peptide (SP) h-region of protein substrates. This ensures the selectivity of the complex towards h-regions shorter than 18-20 amino acids. SPC associates with the translocon complex.

The protein resides in the endoplasmic reticulum membrane. The catalysed reaction is Cleavage of hydrophobic, N-terminal signal or leader sequences from secreted and periplasmic proteins.. Functionally, catalytic component of the signal peptidase complex (SPC) which catalyzes the cleavage of N-terminal signal sequences from nascent proteins as they are translocated into the lumen of the endoplasmic reticulum. Specifically cleaves N-terminal signal peptides that contain a hydrophobic alpha-helix (h-region) shorter than 18-20 amino acids. This is Signal peptidase complex catalytic subunit SEC11 (SEC11) from Ajellomyces dermatitidis (strain ER-3 / ATCC MYA-2586) (Blastomyces dermatitidis).